Here is a 715-residue protein sequence, read N- to C-terminus: Probable ubiquitin thioesterase DG1039 (715 aa).

Residues 86-302 adopt a coiled-coil conformation; sequence KSRNEIKRKA…NNQTDDKLDN (217 aa). Basic and acidic residues predominate over residues 287-302; sequence NKKLENNNQTDDKLDN. Disordered stretches follow at residues 287–367, 398–450, and 502–527; these read NKKL…YNST, QYKQ…QQQY, and LAQSPAVNTPSITPTTNKPNIDSSEA. Residues 339 to 349 show a composition bias toward polar residues; that stretch reads TTAQLPLSITQ. A compositionally biased stretch (low complexity) spans 398-409; the sequence is QYKQQQQQQPIQ. 2 stretches are compositionally biased toward polar residues: residues 410 to 427 and 502 to 525; these read SPTNNINRPNIPQYNNYN and LAQSPAVNTPSITPTTNKPNIDSS. In terms of domain architecture, MPN spans 537–666; sequence IIVHGEVFQE…IFRLTDPPGL (130 aa). Residues His615, His617, Asp628, His630, Cys672, His678, and His680 each coordinate Zn(2+). Positions 615–628 match the JAMM motif motif; sequence HTHPTQDCFLSAVD.

The protein belongs to the peptidase M67C family. It depends on Zn(2+) as a cofactor.

Functionally, may be a zinc metalloprotease that specifically cleaves ubiquitin chains. This Dictyostelium discoideum (Social amoeba) protein is Probable ubiquitin thioesterase DG1039 (DG1039).